We begin with the raw amino-acid sequence, 410 residues long: Peptidase T (410 aa).

A Zn(2+)-binding site is contributed by histidine 79. Aspartate 81 is an active-site residue. Aspartate 142 contributes to the Zn(2+) binding site. Residue glutamate 176 is the Proton acceptor of the active site. Glutamate 177, aspartate 199, and histidine 381 together coordinate Zn(2+).

This sequence belongs to the peptidase M20B family. Zn(2+) is required as a cofactor.

It localises to the cytoplasm. It carries out the reaction Release of the N-terminal residue from a tripeptide.. Cleaves the N-terminal amino acid of tripeptides. This is Peptidase T from Bacillus cereus (strain B4264).